A 320-amino-acid polypeptide reads, in one-letter code: Malate dehydrogenase (320 aa).

NAD(+) contacts are provided by residues 10–15 and aspartate 34; that span reads GSGMIG. The substrate site is built by arginine 83 and arginine 89. Residues asparagine 96 and 119-121 contribute to the NAD(+) site; that span reads ITN. Substrate contacts are provided by asparagine 121 and arginine 152. Catalysis depends on histidine 176, which acts as the Proton acceptor.

It belongs to the LDH/MDH superfamily. MDH type 3 family.

It carries out the reaction (S)-malate + NAD(+) = oxaloacetate + NADH + H(+). In terms of biological role, catalyzes the reversible oxidation of malate to oxaloacetate. The sequence is that of Malate dehydrogenase from Maricaulis maris (strain MCS10) (Caulobacter maris).